Consider the following 481-residue polypeptide: 3-isopropylmalate dehydratase large subunit (481 aa).

[4Fe-4S] cluster-binding residues include C357, C417, and C420. Polar residues predominate over residues 429-441 (SPGQRCASTSNRN). Positions 429–451 (SPGQRCASTSNRNFEGRQGKGGR) are disordered.

The protein belongs to the aconitase/IPM isomerase family. LeuC type 1 subfamily. As to quaternary structure, heterodimer of LeuC and LeuD. Requires [4Fe-4S] cluster as cofactor.

The catalysed reaction is (2R,3S)-3-isopropylmalate = (2S)-2-isopropylmalate. Its pathway is amino-acid biosynthesis; L-leucine biosynthesis; L-leucine from 3-methyl-2-oxobutanoate: step 2/4. In terms of biological role, catalyzes the isomerization between 2-isopropylmalate and 3-isopropylmalate, via the formation of 2-isopropylmaleate. The protein is 3-isopropylmalate dehydratase large subunit of Mycobacterium sp. (strain JLS).